The sequence spans 689 residues: uncharacterized protein (689 aa).

The protein localises to the mitochondrion. This is an uncharacterized protein from Schizosaccharomyces pombe (strain 972 / ATCC 24843) (Fission yeast).